Consider the following 41-residue polypeptide: QTFVTIPGTLRDHPDNLSLAGDGFDTVIKVSCADILTMATR.

Belongs to the peroxidase family. Classical plant (class III) peroxidase subfamily. The cofactor is heme b. It depends on Ca(2+) as a cofactor.

Its subcellular location is the secreted. It catalyses the reaction 2 a phenolic donor + H2O2 = 2 a phenolic radical donor + 2 H2O. Removal of H(2)O(2), oxidation of toxic reductants, biosynthesis and degradation of lignin, suberization, auxin catabolism, response to environmental stresses such as wounding, pathogen attack and oxidative stress. These functions might be dependent on each isozyme/isoform in each plant tissue. This is Peroxidase 3 from Vitis vinifera (Grape).